The sequence spans 349 residues: MAWIEPEVTEKPKKPMFLCVLSSTKTAHIPKLSAAGKTAELTDYTPAGDAELMETGNIISVPVLPMTPPYDTPTPAIMTRSALKLTDAPYHFINSGLIVTPDVPCIDLKANPGEDIREPVAVMDVQGIYERAKLLAKRLRNQADHVVIGESIPGGTTTAMGVLMALGYNGNVSSSADENPLELKKQVVEEGMKASGLTFGCLKDDPMKAIACMGDPMMPAVAGLVAGFQDTDTSVVLAGGTQMAAVYALIKHMGLNTEKIAIATTRYVVEDKSANFIQLTTTLGVPVVYVADPGFGKSSMKGLHRYETGTIKEGAGAGGAMYLAGLFGITQDQFRTEVENVCKLLKAGH.

This sequence belongs to the UPF0284 family.

The polypeptide is UPF0284 protein MM_0708 (Methanosarcina mazei (strain ATCC BAA-159 / DSM 3647 / Goe1 / Go1 / JCM 11833 / OCM 88) (Methanosarcina frisia)).